Consider the following 464-residue polypeptide: Signal recognition particle 54 kDa protein (464 aa).

GTP is bound by residues 104–111, 184–188, and 242–245; these read GLQGSGKT, DTAGR, and TKLD.

It belongs to the GTP-binding SRP family. SRP54 subfamily. In terms of assembly, part of the signal recognition particle protein translocation system, which is composed of SRP and FtsY. Archaeal SRP consists of a 7S RNA molecule of 300 nucleotides and two protein subunits: SRP54 and SRP19.

It is found in the cytoplasm. The enzyme catalyses GTP + H2O = GDP + phosphate + H(+). In terms of biological role, involved in targeting and insertion of nascent membrane proteins into the cytoplasmic membrane. Binds to the hydrophobic signal sequence of the ribosome-nascent chain (RNC) as it emerges from the ribosomes. The SRP-RNC complex is then targeted to the cytoplasmic membrane where it interacts with the SRP receptor FtsY. The sequence is that of Signal recognition particle 54 kDa protein from Halorubrum lacusprofundi (strain ATCC 49239 / DSM 5036 / JCM 8891 / ACAM 34).